Reading from the N-terminus, the 311-residue chain is Syndecan-1 (311 aa).

The N-terminal stretch at 1–22 is a signal peptide; sequence MRRAALWLWLCALALRLQPALP. The Extracellular portion of the chain corresponds to 23–255; the sequence is QIVAVNVPPE…SLLDRKEVLG (233 aa). Disordered stretches follow at residues 29-59 and 152-184; these read VPPEDQDGSGDDSDNFSGSGTGALPDTLSRQ and SHPHGGMQPGLHETSAPTAPGQPDHQPPRVEGG. Residues 32–42 show a composition bias toward acidic residues; that stretch reads EDQDGSGDDSD. Serine 37 carries O-linked (Xyl...) (chondroitin sulfate) serine glycosylation. N-linked (GlcNAc...) asparagine glycosylation is present at asparagine 43. O-linked (Xyl...) (heparan sulfate) serine glycans are attached at residues serine 45 and serine 47. O-linked (Xyl...) (chondroitin sulfate) serine glycans are attached at residues serine 207 and serine 217. Residues 256–276 form a helical membrane-spanning segment; the sequence is GVIAGGLVGLIFAVCLVAFML. Residues 277–311 lie on the Cytoplasmic side of the membrane; the sequence is YRMKKKDEGSYSLEEPKQANGGAYQKPTKQEEFYA. The disordered stretch occupies residues 285-311; sequence GSYSLEEPKQANGGAYQKPTKQEEFYA. Residue serine 286 is modified to Phosphoserine.

It belongs to the syndecan proteoglycan family. As to quaternary structure, interacts with CDCP1. Interacts (via C-terminus) with TIAM1 (via PDZ domain). Interacts with MDK. Post-translationally, shedding is enhanced by a number of factors such as heparanase, thrombin or EGF. Also by stress and wound healing. PMA-mediated shedding is inhibited by TIMP3.

The protein resides in the membrane. Its subcellular location is the secreted. It localises to the extracellular exosome. Its function is as follows. Cell surface proteoglycan that contains both heparan sulfate and chondroitin sulfate and that links the cytoskeleton to the interstitial matrix. Regulates exosome biogenesis in concert with SDCBP and PDCD6IP. Able to induce its own expression in dental mesenchymal cells and also in the neighboring dental epithelial cells via an MSX1-mediated pathway. This is Syndecan-1 from Mus musculus (Mouse).